The following is an 81-amino-acid chain: ATP synthase subunit c (81 aa).

Helical transmembrane passes span 7–27 and 57–77; these read AASVVAAGLAVGLAAIGPGIG and LAFMESLTIYGLVVALVLLFA.

The protein belongs to the ATPase C chain family. As to quaternary structure, F-type ATPases have 2 components, F(1) - the catalytic core - and F(0) - the membrane proton channel. F(1) has five subunits: alpha(3), beta(3), gamma(1), delta(1), epsilon(1). F(0) has four main subunits: a(1), b(1), b'(1) and c(10-14). The alpha and beta chains form an alternating ring which encloses part of the gamma chain. F(1) is attached to F(0) by a central stalk formed by the gamma and epsilon chains, while a peripheral stalk is formed by the delta, b and b' chains.

The protein resides in the cellular thylakoid membrane. In terms of biological role, f(1)F(0) ATP synthase produces ATP from ADP in the presence of a proton or sodium gradient. F-type ATPases consist of two structural domains, F(1) containing the extramembraneous catalytic core and F(0) containing the membrane proton channel, linked together by a central stalk and a peripheral stalk. During catalysis, ATP synthesis in the catalytic domain of F(1) is coupled via a rotary mechanism of the central stalk subunits to proton translocation. Its function is as follows. Key component of the F(0) channel; it plays a direct role in translocation across the membrane. A homomeric c-ring of between 10-14 subunits forms the central stalk rotor element with the F(1) delta and epsilon subunits. The sequence is that of ATP synthase subunit c from Synechococcus sp. (strain CC9311).